The following is a 330-amino-acid chain: Delta-aminolevulinic acid dehydratase (330 aa).

Cysteine 122, cysteine 124, histidine 131, and cysteine 132 together coordinate Zn(2+). Residue lysine 199 is the Schiff-base intermediate with substrate of the active site. Lysine 199 carries the N6-succinyllysine modification. Arginine 209 is a 5-aminolevulinate binding site. Residue serine 215 is modified to Phosphoserine. Arginine 221 is a binding site for 5-aminolevulinate. Cysteine 223 provides a ligand contact to Zn(2+). Lysine 252 acts as the Schiff-base intermediate with substrate in catalysis. An N6-succinyllysine modification is found at lysine 252. Positions 279 and 318 each coordinate 5-aminolevulinate.

Belongs to the ALAD family. As to quaternary structure, homooctamer; active form. Homohexamer; low activity form. Zn(2+) is required as a cofactor.

It is found in the cytoplasm. Its subcellular location is the cytosol. The enzyme catalyses 2 5-aminolevulinate = porphobilinogen + 2 H2O + H(+). It functions in the pathway porphyrin-containing compound metabolism; protoporphyrin-IX biosynthesis; coproporphyrinogen-III from 5-aminolevulinate: step 1/4. Its activity is regulated as follows. Can alternate between a fully active homooctamer and a low-activity homohexamer. A bound magnesium ion may promote the assembly of the fully active homooctamer. The magnesium-binding site is absent in the low-activity homohexamer. Inhibited by compounds that favor the hexameric state. Inhibited by divalent lead ions. The lead ions partially displace the zinc cofactor. Functionally, catalyzes an early step in the biosynthesis of tetrapyrroles. Binds two molecules of 5-aminolevulinate per subunit, each at a distinct site, and catalyzes their condensation to form porphobilinogen. The chain is Delta-aminolevulinic acid dehydratase (ALAD) from Macaca fascicularis (Crab-eating macaque).